Consider the following 296-residue polypeptide: Protein-export membrane protein SecF (296 aa).

Transmembrane regions (helical) follow at residues 23–43 (MIIY…ANYV), 144–164 (AIVY…RVPV), 169–189 (VVFS…IFGI), 194–214 (ATIA…ILLT), 236–256 (GFTM…FSTA), and 265–285 (VLIF…AGVL).

The protein belongs to the SecD/SecF family. SecF subfamily. Part of the protein translocation apparatus. Forms a complex with SecD.

The protein resides in the cell membrane. Its function is as follows. Involved in protein export. The polypeptide is Protein-export membrane protein SecF (Pyrococcus furiosus (strain ATCC 43587 / DSM 3638 / JCM 8422 / Vc1)).